Here is a 371-residue protein sequence, read N- to C-terminus: Queuine tRNA-ribosyltransferase (371 aa).

D90 serves as the catalytic Proton acceptor. Residues 90–94 (DSGGF), D144, Q188, and G215 contribute to the substrate site. Positions 246–252 (GVGTPED) are RNA binding. D265 acts as the Nucleophile in catalysis. The interval 270–274 (TRNAR) is RNA binding; important for wobble base 34 recognition. Zn(2+) contacts are provided by C303, C305, C308, and H334.

The protein belongs to the queuine tRNA-ribosyltransferase family. In terms of assembly, homodimer. Within each dimer, one monomer is responsible for RNA recognition and catalysis, while the other monomer binds to the replacement base PreQ1. Requires Zn(2+) as cofactor.

The enzyme catalyses 7-aminomethyl-7-carbaguanine + guanosine(34) in tRNA = 7-aminomethyl-7-carbaguanosine(34) in tRNA + guanine. Its pathway is tRNA modification; tRNA-queuosine biosynthesis. Its function is as follows. Catalyzes the base-exchange of a guanine (G) residue with the queuine precursor 7-aminomethyl-7-deazaguanine (PreQ1) at position 34 (anticodon wobble position) in tRNAs with GU(N) anticodons (tRNA-Asp, -Asn, -His and -Tyr). Catalysis occurs through a double-displacement mechanism. The nucleophile active site attacks the C1' of nucleotide 34 to detach the guanine base from the RNA, forming a covalent enzyme-RNA intermediate. The proton acceptor active site deprotonates the incoming PreQ1, allowing a nucleophilic attack on the C1' of the ribose to form the product. After dissociation, two additional enzymatic reactions on the tRNA convert PreQ1 to queuine (Q), resulting in the hypermodified nucleoside queuosine (7-(((4,5-cis-dihydroxy-2-cyclopenten-1-yl)amino)methyl)-7-deazaguanosine). In Neisseria gonorrhoeae (strain NCCP11945), this protein is Queuine tRNA-ribosyltransferase.